Consider the following 173-residue polypeptide: Adenine phosphoribosyltransferase (173 aa).

This sequence belongs to the purine/pyrimidine phosphoribosyltransferase family. In terms of assembly, homodimer.

The protein localises to the cytoplasm. The catalysed reaction is AMP + diphosphate = 5-phospho-alpha-D-ribose 1-diphosphate + adenine. It participates in purine metabolism; AMP biosynthesis via salvage pathway; AMP from adenine: step 1/1. In terms of biological role, catalyzes a salvage reaction resulting in the formation of AMP, that is energically less costly than de novo synthesis. In Methanococcus vannielii (strain ATCC 35089 / DSM 1224 / JCM 13029 / OCM 148 / SB), this protein is Adenine phosphoribosyltransferase.